The primary structure comprises 427 residues: Serine hydroxymethyltransferase (427 aa).

Residue 120–122 (GHI) coordinates (6S)-5,6,7,8-tetrahydrofolate. N6-(pyridoxal phosphate)lysine is present on lysine 226. Glutamate 243 provides a ligand contact to (6S)-5,6,7,8-tetrahydrofolate.

Belongs to the SHMT family. Homodimer. Pyridoxal 5'-phosphate is required as a cofactor.

The protein localises to the cytoplasm. It functions in the pathway amino-acid biosynthesis; glycine biosynthesis; glycine from L-serine: step 1/1. Catalyzes the reversible interconversion of serine and glycine with a modified folate serving as the one-carbon carrier. Also exhibits a pteridine-independent aldolase activity toward beta-hydroxyamino acids, producing glycine and aldehydes, via a retro-aldol mechanism. This is Serine hydroxymethyltransferase from Thermococcus gammatolerans (strain DSM 15229 / JCM 11827 / EJ3).